The sequence spans 302 residues: Ribosomal protein L11 methyltransferase (302 aa).

S-adenosyl-L-methionine is bound by residues T148, G169, D191, and N237.

Belongs to the methyltransferase superfamily. PrmA family.

The protein resides in the cytoplasm. It carries out the reaction L-lysyl-[protein] + 3 S-adenosyl-L-methionine = N(6),N(6),N(6)-trimethyl-L-lysyl-[protein] + 3 S-adenosyl-L-homocysteine + 3 H(+). In terms of biological role, methylates ribosomal protein L11. This is Ribosomal protein L11 methyltransferase from Desulfosudis oleivorans (strain DSM 6200 / JCM 39069 / Hxd3) (Desulfococcus oleovorans).